Reading from the N-terminus, the 261-residue chain is tRNA threonylcarbamoyladenosine dehydratase (261 aa).

A helical transmembrane segment spans residues 230–250 (CANGFGAATMITATFGFFAVS).

Belongs to the HesA/MoeB/ThiF family.

The protein resides in the membrane. In terms of biological role, catalyzes the ATP-dependent dehydration of threonylcarbamoyladenosine at position 37 (t(6)A37) to form cyclic t(6)A37 (ct(6)A37) in tRNAs that read codons beginning with adenine. The polypeptide is tRNA threonylcarbamoyladenosine dehydratase (tcdA) (Haemophilus influenzae (strain ATCC 51907 / DSM 11121 / KW20 / Rd)).